A 199-amino-acid polypeptide reads, in one-letter code: Elongation factor Ts (199 aa).

The interval T82–V85 is involved in Mg(2+) ion dislocation from EF-Tu.

The protein belongs to the EF-Ts family.

The protein resides in the cytoplasm. Its function is as follows. Associates with the EF-Tu.GDP complex and induces the exchange of GDP to GTP. It remains bound to the aminoacyl-tRNA.EF-Tu.GTP complex up to the GTP hydrolysis stage on the ribosome. The polypeptide is Elongation factor Ts (Leptospira interrogans serogroup Icterohaemorrhagiae serovar copenhageni (strain Fiocruz L1-130)).